The sequence spans 227 residues: 27 kDa A-type inclusion protein (227 aa).

Positions 4–210 (MPKQREMRRL…AECRRGNNGS (207 aa)) form a coiled coil.

The polypeptide is 27 kDa A-type inclusion protein (Bos taurus (Bovine)).